A 529-amino-acid chain; its full sequence is Calcium-dependent protein kinase 3 (529 aa).

Residues 1–73 (MGHRHSKSKS…GRILGRPMEE (73 aa)) are disordered. A lipid anchor (N-myristoyl glycine) is attached at glycine 2. Residues 39–53 (SGSGTVGSSGSGTGG) show a composition bias toward gly residues. Residues 78 to 336 (YEFGRELGRG…AAEVLNHPWI (259 aa)) enclose the Protein kinase domain. Residues 84 to 92 (LGRGQFGVT) and lysine 107 contribute to the ATP site. Aspartate 202 functions as the Proton acceptor in the catalytic mechanism. A Phosphoserine modification is found at serine 242. Residues 342–372 (ASDKPLDNAVLSRMKQFRAMNKLKKMALKVI) form an autoinhibitory domain region. 4 consecutive EF-hand domains span residues 379–414 (EEII…LGSK), 415–450 (ISEA…MNRI), 451–485 (ERED…KYNM), and 486–521 (GDDK…GNPE). 19 residues coordinate Ca(2+): aspartate 392, aspartate 394, asparagine 396, glutamate 403, aspartate 428, aspartate 430, aspartate 432, serine 434, glutamate 439, aspartate 464, aspartate 466, serine 468, tyrosine 470, glutamate 475, aspartate 499, aspartate 501, aspartate 503, lysine 505, and glutamate 510.

The protein belongs to the protein kinase superfamily. Ser/Thr protein kinase family. CDPK subfamily. In terms of assembly, interacts with GHR1. Expressed in both guard cells and mesophyll cells.

It is found in the cytoplasm. Its subcellular location is the nucleus. It carries out the reaction L-seryl-[protein] + ATP = O-phospho-L-seryl-[protein] + ADP + H(+). The catalysed reaction is L-threonyl-[protein] + ATP = O-phospho-L-threonyl-[protein] + ADP + H(+). With respect to regulation, activated by calcium. Autophosphorylation may play an important role in the regulation of the kinase activity. May play a role in signal transduction pathways that involve calcium as a second messenger. Functions in abscisic acid (ABA) regulation of guard cell S-type anion- and Ca(2+)-permeable channels and stomatal closure. This chain is Calcium-dependent protein kinase 3, found in Arabidopsis thaliana (Mouse-ear cress).